A 128-amino-acid polypeptide reads, in one-letter code: Large ribosomal subunit protein uL22 (128 aa).

The protein belongs to the universal ribosomal protein uL22 family. In terms of assembly, part of the 50S ribosomal subunit.

Its function is as follows. This protein binds specifically to 23S rRNA; its binding is stimulated by other ribosomal proteins, e.g. L4, L17, and L20. It is important during the early stages of 50S assembly. It makes multiple contacts with different domains of the 23S rRNA in the assembled 50S subunit and ribosome. Functionally, the globular domain of the protein is located near the polypeptide exit tunnel on the outside of the subunit, while an extended beta-hairpin is found that lines the wall of the exit tunnel in the center of the 70S ribosome. The sequence is that of Large ribosomal subunit protein uL22 from Nitrobacter hamburgensis (strain DSM 10229 / NCIMB 13809 / X14).